Consider the following 180-residue polypeptide: MSGLTIFSDQQPEKPLWQSHDAEEIQQQLTAIGVRFERWQADCELGENPQPEAVIAAYQHEIDRLVAENGYKSWDVISMRPDNPQREALREKFLSEHTHGEDEVRFFVEGSGLFCLHLNEKVYQILCEKNDLLSVPADIPHWFDMGSAPNFTAIRVFDNPEGWIARSTGDNIADGYPRLA.

Residues histidine 97, histidine 99, glutamate 103, and histidine 141 each contribute to the Fe(2+) site. Histidine 97, histidine 99, glutamate 103, and histidine 141 together coordinate Ni(2+).

Belongs to the acireductone dioxygenase (ARD) family. Monomer. Requires Fe(2+) as cofactor. The cofactor is Ni(2+).

It carries out the reaction 1,2-dihydroxy-5-(methylsulfanyl)pent-1-en-3-one + O2 = 3-(methylsulfanyl)propanoate + CO + formate + 2 H(+). The catalysed reaction is 1,2-dihydroxy-5-(methylsulfanyl)pent-1-en-3-one + O2 = 4-methylsulfanyl-2-oxobutanoate + formate + 2 H(+). The protein operates within amino-acid biosynthesis; L-methionine biosynthesis via salvage pathway; L-methionine from S-methyl-5-thio-alpha-D-ribose 1-phosphate: step 5/6. In terms of biological role, catalyzes 2 different reactions between oxygen and the acireductone 1,2-dihydroxy-3-keto-5-methylthiopentene (DHK-MTPene) depending upon the metal bound in the active site. Fe-containing acireductone dioxygenase (Fe-ARD) produces formate and 2-keto-4-methylthiobutyrate (KMTB), the alpha-ketoacid precursor of methionine in the methionine recycle pathway. Ni-containing acireductone dioxygenase (Ni-ARD) produces methylthiopropionate, carbon monoxide and formate, and does not lie on the methionine recycle pathway. This Yersinia pseudotuberculosis serotype O:3 (strain YPIII) protein is Acireductone dioxygenase.